The primary structure comprises 748 residues: MSSDTSASRPPQPDTRTASKSESENPAIPSPHPKSNAPLTNRDWWPNQIDVSRLHPHVAEANPLGEDFDYAEEFAKLDVEALKADVISVMTTSQDWWPADYGHYGGLFIRMSWHAAGTYRIHDGRGGGGQGMQRFAPLNSWPDNVSLDKARRLLWPVKKKYGNKISWADLIIFAGNCALESMGFKTFGFAFGREDVWEPEEILWGEEDEWLGTDKRYPGTGERELAQPYGATTMGLIYVNPEGPEGKPDPIAAAIDIRETFGRMAMNDEETAALIVGGHSFGKTHGAGDADLVGPEPEAAPIEQQGLGWKSSHGTGVGKDAITSGLEVVWTPTPTKWDNTFLETLYGYEWELTKSPAGAWQFTAKDGAGAGTIPDPFGGPGRAPTMLVTDISLRESPIYRDITRRWLDHPEELADAFAKAWYKLLHRDMGLVSRFLGPWVPEPQLWQDPVPPVDHPLVDDNDVAALKDKVLASGLSVPQLVKTAWSAAGSYRNTDKRGGANGGRLRLQPQRNWEANEPSELDKVLPVLEKIQQDFNASASGGKKISLADLIVLAGSAAVEKAAKDAGYEISVHFAPGRTDASQESTDVDSFAVLEPRADGFRNFARPGEKAPLEQLLLERAYLLGVTGPEMTVLVGGLRALGANHGGSKHGVFTDRPGALTNDFFVNLLDMGTEWKASETAENVYEGHDRATGALKWTATANDLVFGSNSVLRALAEVYAQDDNQGKFVEDFVAAWVKVMNNDRFDLK.

Over residues 1–16 the composition is skewed to polar residues; sequence MSSDTSASRPPQPDTR. A disordered region spans residues 1 to 43; the sequence is MSSDTSASRPPQPDTRTASKSESENPAIPSPHPKSNAPLTNRD. The tryptophyl-tyrosyl-methioninium (Trp-Tyr) (with M-264) cross-link spans 113 to 238; that stretch reads WHAAGTYRIH…YGATTMGLIY (126 aa). His114 acts as the Proton acceptor in catalysis. Positions 238-264 form a cross-link, tryptophyl-tyrosyl-methioninium (Tyr-Met) (with W-113); the sequence is YVNPEGPEGKPDPIAAAIDIRETFGRM. His279 lines the heme b pocket.

The protein belongs to the peroxidase family. Peroxidase/catalase subfamily. As to quaternary structure, homodimer or homotetramer. The cofactor is heme b. In terms of processing, formation of the three residue Trp-Tyr-Met cross-link is important for the catalase, but not the peroxidase activity of the enzyme.

The catalysed reaction is H2O2 + AH2 = A + 2 H2O. It carries out the reaction 2 H2O2 = O2 + 2 H2O. Its function is as follows. Bifunctional enzyme with both catalase and broad-spectrum peroxidase activity. The protein is Catalase-peroxidase of Mycolicibacterium paratuberculosis (strain ATCC BAA-968 / K-10) (Mycobacterium paratuberculosis).